The primary structure comprises 341 residues: UDP-N-acetylenolpyruvoylglucosamine reductase (341 aa).

The 171-residue stretch at 15-185 (VTQSCLSLIE…TAVGLRLPKT (171 aa)) folds into the FAD-binding PCMH-type domain. Arginine 161 is an active-site residue. The Proton donor role is filled by serine 231. Glutamate 327 is an active-site residue.

It belongs to the MurB family. Requires FAD as cofactor.

It localises to the cytoplasm. The catalysed reaction is UDP-N-acetyl-alpha-D-muramate + NADP(+) = UDP-N-acetyl-3-O-(1-carboxyvinyl)-alpha-D-glucosamine + NADPH + H(+). It functions in the pathway cell wall biogenesis; peptidoglycan biosynthesis. Functionally, cell wall formation. The protein is UDP-N-acetylenolpyruvoylglucosamine reductase of Shewanella oneidensis (strain ATCC 700550 / JCM 31522 / CIP 106686 / LMG 19005 / NCIMB 14063 / MR-1).